A 401-amino-acid polypeptide reads, in one-letter code: MLLVRKWLHTCFKYWIYFLPVVTLLLPLVCYPFLSISQKIYGYFVFTTISSLGWFFALRRRENQLKTAAVQLLQTKIRKLTENNEGLRQIRESLKEHQQESAQLQIQSQKLKNSLFHLQGLLVKTKGEGQKLETLLLHRTEENRCLKMQVDSLIQECGEKTEEVQTLNRELAETLAYQQALNDEYQATFSEQRNMLDKRQIYIGKLENKVQDLMYEIRNLLQLESDIAENIPSQESNAVTGNISLQLSSELKKIAFKAENIEAASSLTASRYLHTDTSVHNYSLECRQLFDSLREENLGMLFVYARQSQRAVFANALFKTWTGYCAEDFLKFGSDIVISGGKQWMEDLHSSREECSGRLVIKTKSRGHLPFRYCLMALNKGPLCYHVLGVLYPLHKEVLQS.

It belongs to the UPF0242 family.

This chain is UPF0242 protein CPn_0755/CP_1117/CPj0755/CpB0783, found in Chlamydia pneumoniae (Chlamydophila pneumoniae).